A 376-amino-acid polypeptide reads, in one-letter code: Putative glutamate--cysteine ligase 2-1 (376 aa).

The protein belongs to the glutamate--cysteine ligase type 2 family. YbdK subfamily.

It carries out the reaction L-cysteine + L-glutamate + ATP = gamma-L-glutamyl-L-cysteine + ADP + phosphate + H(+). Its function is as follows. ATP-dependent carboxylate-amine ligase which exhibits weak glutamate--cysteine ligase activity. This chain is Putative glutamate--cysteine ligase 2-1, found in Rubrobacter xylanophilus (strain DSM 9941 / JCM 11954 / NBRC 16129 / PRD-1).